A 443-amino-acid polypeptide reads, in one-letter code: tRNA modification GTPase MnmE (443 aa).

3 residues coordinate (6S)-5-formyl-5,6,7,8-tetrahydrofolate: Arg-23, Glu-82, and Lys-121. The region spanning 215-364 is the TrmE-type G domain; that stretch reads GTSIVLAGHP…LKQFIQQWMQ (150 aa). Asn-225 is a K(+) binding site. GTP is bound by residues 225–230, 244–250, and 269–272; these read NAGKSS, TDIPGTT, and DSAG. Mg(2+) is bound at residue Ser-229. K(+) contacts are provided by Thr-244, Ile-246, and Thr-249. Thr-250 provides a ligand contact to Mg(2+). Lys-443 contributes to the (6S)-5-formyl-5,6,7,8-tetrahydrofolate binding site.

It belongs to the TRAFAC class TrmE-Era-EngA-EngB-Septin-like GTPase superfamily. TrmE GTPase family. Homodimer. Heterotetramer of two MnmE and two MnmG subunits. The cofactor is K(+).

The protein localises to the cytoplasm. Exhibits a very high intrinsic GTPase hydrolysis rate. Involved in the addition of a carboxymethylaminomethyl (cmnm) group at the wobble position (U34) of certain tRNAs, forming tRNA-cmnm(5)s(2)U34. The sequence is that of tRNA modification GTPase MnmE from Chlamydia abortus (strain DSM 27085 / S26/3) (Chlamydophila abortus).